The chain runs to 81 residues: Photosystem I iron-sulfur center (81 aa).

2 consecutive 4Fe-4S ferredoxin-type domains span residues 2-31 and 39-68; these read SHSV…MIPW and IASA…VRVY. [4Fe-4S] cluster contacts are provided by Cys11, Cys14, Cys17, Cys21, Cys48, Cys51, Cys54, and Cys58.

As to quaternary structure, the eukaryotic PSI reaction center is composed of at least 11 subunits. The cofactor is [4Fe-4S] cluster.

The protein localises to the plastid. It is found in the chloroplast thylakoid membrane. It catalyses the reaction reduced [plastocyanin] + hnu + oxidized [2Fe-2S]-[ferredoxin] = oxidized [plastocyanin] + reduced [2Fe-2S]-[ferredoxin]. In terms of biological role, apoprotein for the two 4Fe-4S centers FA and FB of photosystem I (PSI); essential for photochemical activity. FB is the terminal electron acceptor of PSI, donating electrons to ferredoxin. The C-terminus interacts with PsaA/B/D and helps assemble the protein into the PSI complex. Required for binding of PsaD and PsaE to PSI. PSI is a plastocyanin-ferredoxin oxidoreductase, converting photonic excitation into a charge separation, which transfers an electron from the donor P700 chlorophyll pair to the spectroscopically characterized acceptors A0, A1, FX, FA and FB in turn. This chain is Photosystem I iron-sulfur center, found in Arabis hirsuta (Hairy rock-cress).